A 288-amino-acid polypeptide reads, in one-letter code: Bifunctional protein FolD (288 aa).

Residues 166–168 and isoleucine 232 each bind NADP(+); that span reads GAS.

This sequence belongs to the tetrahydrofolate dehydrogenase/cyclohydrolase family. In terms of assembly, homodimer.

The catalysed reaction is (6R)-5,10-methylene-5,6,7,8-tetrahydrofolate + NADP(+) = (6R)-5,10-methenyltetrahydrofolate + NADPH. It catalyses the reaction (6R)-5,10-methenyltetrahydrofolate + H2O = (6R)-10-formyltetrahydrofolate + H(+). The protein operates within one-carbon metabolism; tetrahydrofolate interconversion. Its function is as follows. Catalyzes the oxidation of 5,10-methylenetetrahydrofolate to 5,10-methenyltetrahydrofolate and then the hydrolysis of 5,10-methenyltetrahydrofolate to 10-formyltetrahydrofolate. The sequence is that of Bifunctional protein FolD from Escherichia fergusonii (strain ATCC 35469 / DSM 13698 / CCUG 18766 / IAM 14443 / JCM 21226 / LMG 7866 / NBRC 102419 / NCTC 12128 / CDC 0568-73).